The primary structure comprises 218 residues: Glutathione S-transferase-like protein OpS6 (218 aa).

The GST N-terminal domain occupies 5-86 (QPIKLYAHKK…YLIEQYDKDG (82 aa)). The GST C-terminal domain occupies 92 to 218 (SLQDKSLARA…KIAATKAALA (127 aa)).

Belongs to the GST superfamily.

Its pathway is secondary metabolite biosynthesis. Its function is as follows. Glutathione S-transferase-like protein; part of the gene cluster that mediates the biosynthesis of the bibenzoquinone oosporein, a metabolite required for fungal virulence that acts by evading host immunity to facilitate fungal multiplication in insects. The non-reducing polyketide synthase OpS1 produces orsellinic acid by condensing acetyl-CoA with 3 malonyl-CoA units. Orsellinic acid is then hydroxylated to benzenetriol by the hydroxylase OpS4. The intermediate is oxidized either nonenzymatically to 5,5'-dideoxy-oosporein or enzymatically to benzenetetrol by the oxidoreductase OpS7. The latter is further dimerized to oosporein by the catalase OpS5. OpS6 probably functions en route for protecting cells against oxidative stress by scavenging any leaked free radical form of benzenetetrol by activating the thiol group of glutathione. This chain is Glutathione S-transferase-like protein OpS6, found in Beauveria bassiana (strain ARSEF 2860) (White muscardine disease fungus).